Here is a 99-residue protein sequence, read N- to C-terminus: Small ribosomal subunit protein eS24 (99 aa).

The protein belongs to the eukaryotic ribosomal protein eS24 family.

This is Small ribosomal subunit protein eS24 from Pyrococcus horikoshii (strain ATCC 700860 / DSM 12428 / JCM 9974 / NBRC 100139 / OT-3).